The chain runs to 161 residues: MIIEAKVLKFGDKIDTDIIIPAKYLKYTDPQYLAQHAMEPLDPEFYKKASSGVIIVAGKVFGMGSSREQAAMALKAAGVKAIIAESFARIFFRNAINNGLPVITLQNATKEINQGDLVRVNVETGEIVVNGSKVLKGKGISGMPLEILITGGLITYLKKAS.

It belongs to the LeuD family. LeuD type 2 subfamily. In terms of assembly, heterodimer of LeuC and LeuD.

The catalysed reaction is (2R,3S)-3-isopropylmalate = (2S)-2-isopropylmalate. It functions in the pathway amino-acid biosynthesis; L-leucine biosynthesis; L-leucine from 3-methyl-2-oxobutanoate: step 2/4. In terms of biological role, catalyzes the isomerization between 2-isopropylmalate and 3-isopropylmalate, via the formation of 2-isopropylmaleate. This Sulfolobus acidocaldarius (strain ATCC 33909 / DSM 639 / JCM 8929 / NBRC 15157 / NCIMB 11770) protein is 3-isopropylmalate dehydratase small subunit.